The chain runs to 272 residues: Small ribosomal subunit protein uS2 (272 aa).

Residues 238-272 (ASKEEQTEEAEEETLSSKYREQDFQEAKSGARGEK) are disordered. A compositionally biased stretch (basic and acidic residues) spans 255-272 (KYREQDFQEAKSGARGEK).

The protein belongs to the universal ribosomal protein uS2 family.

In Protochlamydia amoebophila (strain UWE25), this protein is Small ribosomal subunit protein uS2.